Reading from the N-terminus, the 86-residue chain is uncharacterized protein (86 aa).

3 consecutive transmembrane segments (helical) span residues 4-24 (ILIIAEYTLLASLAVFSIAAV), 34-54 (MGLVGISGLNIAIATILILIN), and 64-84 (DIAYALVLLGPVGTIAFARVL).

To M.jannaschii MJ1223.

Its subcellular location is the cell membrane. This is an uncharacterized protein from Methanothermobacter thermautotrophicus (strain ATCC 29096 / DSM 1053 / JCM 10044 / NBRC 100330 / Delta H) (Methanobacterium thermoautotrophicum).